The chain runs to 90 residues: PqqA binding protein 2 (90 aa).

Belongs to the PqqD family. In terms of assembly, monomer. Interacts with PqqE.

It participates in cofactor biosynthesis; pyrroloquinoline quinone biosynthesis. In terms of biological role, functions as a PqqA binding protein and presents PqqA to PqqE, in the pyrroloquinoline quinone (PQQ) biosynthetic pathway. In Pseudomonas putida (strain ATCC 47054 / DSM 6125 / CFBP 8728 / NCIMB 11950 / KT2440), this protein is PqqA binding protein 2 (pqqD2).